Here is a 276-residue protein sequence, read N- to C-terminus: NH(3)-dependent NAD(+) synthetase (276 aa).

43–50 is an ATP binding site; the sequence is GISGGVDS. Asp-49 serves as a coordination point for Mg(2+). A deamido-NAD(+)-binding site is contributed by Arg-146. ATP is bound at residue Thr-166. Position 171 (Glu-171) interacts with Mg(2+). Deamido-NAD(+) is bound by residues Lys-179 and Asp-186. 2 residues coordinate ATP: Lys-195 and Thr-217. 266-267 serves as a coordination point for deamido-NAD(+); it reads HK.

This sequence belongs to the NAD synthetase family. As to quaternary structure, homodimer.

It catalyses the reaction deamido-NAD(+) + NH4(+) + ATP = AMP + diphosphate + NAD(+) + H(+). It participates in cofactor biosynthesis; NAD(+) biosynthesis; NAD(+) from deamido-NAD(+) (ammonia route): step 1/1. Functionally, catalyzes the ATP-dependent amidation of deamido-NAD to form NAD. Uses ammonia as a nitrogen source. The protein is NH(3)-dependent NAD(+) synthetase of Aliivibrio salmonicida (strain LFI1238) (Vibrio salmonicida (strain LFI1238)).